The sequence spans 601 residues: uncharacterized protein (601 aa).

A signal peptide spans 1 to 24 (MKLSSLPSGLGLASLLGLISSATA).

The protein resides in the membrane. This is an uncharacterized protein from Schizosaccharomyces pombe (strain 972 / ATCC 24843) (Fission yeast).